The chain runs to 166 residues: C-signal (166 aa).

Post-translationally, the mature C-signal (p17) is derived from the precursor sequence (p25) by proteolytic cleavage. The subtilisin-like protease PopC is directly responsible for cleavage of p25 to p17. The cleavage site is probably located between amino acid residues 60 and 68 in p25.

Its subcellular location is the secreted. The protein resides in the cell outer membrane. Synthesized as a precursor protein (p25), which is cleaved after secretion to generate the mature active C-signal (p17). The p25 precursor purified from M.xanthus cells does not display C-signal activity. Its function is as follows. Cell-cell signaling protein required for fruiting body formation, a multicellular developmental program that is induced in response to starvation. Necessary for rippling, cellular aggregation, spore differentiation and for gene expression that is initiated after 6 hours of starvation. In starving cells, the C-signal directly induces aggregation and sporulation, which are induced at distinct threshold levels of C-signaling. Contact with C-signaling induces cells to glide with high speed and low stop and reversal frequencies toward aggregation centers. The C-signal acts as a morphogen and induces distinct events at distinct threshold levels. A regulated increase in the level of C-signaling during development ensures the correct temporal order of aggregation and sporulation. In Myxococcus xanthus, this protein is C-signal.